The chain runs to 622 residues: Serine/threonine-protein kinase MAK (622 aa).

Residues 4 to 284 (YTTMKQLGDG…ASQALKHPYF (281 aa)) form the Protein kinase domain. ATP-binding positions include 10–18 (LGDGTYGSV) and Lys33. Residue Asp125 is the Proton acceptor of the active site. Thr157 is modified (phosphothreonine; by autocatalysis). Tyr159 is modified (phosphotyrosine; by autocatalysis). The interval 301 to 371 (QTLHKQLQPL…QGHQKPPQTM (71 aa)) is disordered. A compositionally biased stretch (polar residues) spans 336–355 (QPKQGHQPLQTIQPPQNTVT).

It belongs to the protein kinase superfamily. CMGC Ser/Thr protein kinase family. CDC2/CDKX subfamily. As to quaternary structure, interacts with AR and CDK20. Found in a complex containing MAK, AR and NCOA3. Interacts with FZR1 (via WD repeats). Interacts with RP1. Mg(2+) is required as a cofactor. Autophosphorylated. Phosphorylated on serine and threonine residues. As to expression, in pre- and postmeiotic male germ cells in testis. In photoreceptor cells of the retina and in the olfactory receptors, and in certain epithelia of the respiratory tract and choroid plexus (brain).

Its subcellular location is the nucleus. It localises to the cytoplasm. The protein resides in the cytoskeleton. The protein localises to the microtubule organizing center. It is found in the centrosome. Its subcellular location is the spindle. It localises to the midbody. The protein resides in the cell projection. The protein localises to the cilium. It is found in the photoreceptor outer segment. Its subcellular location is the photoreceptor inner segment. The enzyme catalyses L-seryl-[protein] + ATP = O-phospho-L-seryl-[protein] + ADP + H(+). The catalysed reaction is L-threonyl-[protein] + ATP = O-phospho-L-threonyl-[protein] + ADP + H(+). In terms of biological role, essential for the regulation of ciliary length and required for the long-term survival of photoreceptors. Could have an important function in sensory cells and in spermatogenesis. May participate in signaling pathways used in visual and olfactory sensory transduction. Phosphorylates FZR1 in a cell cycle-dependent manner. Plays a role in the transcriptional coactivation of AR. This Mus musculus (Mouse) protein is Serine/threonine-protein kinase MAK (Mak).